Here is a 332-residue protein sequence, read N- to C-terminus: Polyprenyl transferase yanG (332 aa).

Helical transmembrane passes span 42 to 62, 72 to 92, 145 to 165, 170 to 190, 200 to 220, 242 to 262, 266 to 286, and 300 to 320; these read IWGACVAAGVSDTVLEPLAFA, VTATHCAFCTFKSVPFCFFVV, PAVTVSFIPVWVLSVIYPFMK, FPQVVLGAIIGGAVFPGWVGV, ALPLFFATAAWVVYFDVFYAT, VKILLAGLGILQIAFFAMTAL, LSLIFWILGIGVWAVSVPWHV, and VFKANIKLGLYMTGVSLLELV.

The protein belongs to the UbiA prenyltransferase family. Mg(2+) is required as a cofactor.

It localises to the membrane. It functions in the pathway secondary metabolite biosynthesis; terpenoid biosynthesis. Its function is as follows. Polyprenyl transferase; part of the gene cluster that mediates the biosynthesis of yanuthone D, a fungal isoprenoid epoxycyclohexenone that acts as an antibiotic against fungi and bacteria. The first step of the pathway is the synthesis of 6-methylsalicylic acid (6-MSA) by the polyketide synthase yanA. 6-MSA is then converted to m-cresol by the decarboxylase yanB. The cytochrome P450 monooxygenase yanC then catalyzes the oxidation of m-cresol to toluquinol. Epoxidation of toluquinol is then performed by the short chain dehydrogenase yanD, with the help of yanE, and a further prenylation by yanG leads to 7-deacetoxyyanuthone A. The next step is the hydroxylation of C-22 of 7-deacetoxyyanuthone A by the cytochrome P450 monooxygenase yanH to yield 22-deacetylyanuthone A. O-Mevalon transferase yanI then attaches mevalon to the hydroxyl group of 22-deacetylyanuthone A to produce yanuthone E. Finally, the FAD-dependent monooxygenase yanF oxidizes the hydroxyl group at C15 of yanuthone E to form yanuthone D. Furthermore, several branching points in the pathway lead to the production of yanuthones F and G from 7-deacetoxyyanuthone A; yanuthones H and I from 22-deacetylyanuthone A; and yanuthone J from yanuthone E. YanG is also involved in the synthesis of yanuthone X1 which does not have 6-methylsalicylic acid (6-MSA) as precursor. The sequence is that of Polyprenyl transferase yanG from Aspergillus niger (strain ATCC 1015 / CBS 113.46 / FGSC A1144 / LSHB Ac4 / NCTC 3858a / NRRL 328 / USDA 3528.7).